Here is a 232-residue protein sequence, read N- to C-terminus: Nucleoside diphosphate kinase 2, chloroplastic (232 aa).

The N-terminal 79 residues, 1 to 79, are a transit peptide targeting the chloroplast; sequence MGCLSVVGAS…TRIFLPHLVA (79 aa). ATP-binding residues include Lys92, Phe140, Arg168, Thr174, Arg185, and Asn195. His198 functions as the Pros-phosphohistidine intermediate in the catalytic mechanism.

It belongs to the NDK family. It depends on Mg(2+) as a cofactor.

The protein localises to the plastid. Its subcellular location is the chloroplast. It carries out the reaction a 2'-deoxyribonucleoside 5'-diphosphate + ATP = a 2'-deoxyribonucleoside 5'-triphosphate + ADP. The enzyme catalyses a ribonucleoside 5'-diphosphate + ATP = a ribonucleoside 5'-triphosphate + ADP. Functionally, major role in the synthesis of nucleoside triphosphates other than ATP. The ATP gamma phosphate is transferred to the NDP beta phosphate via a ping-pong mechanism, using a phosphorylated active-site intermediate. The chain is Nucleoside diphosphate kinase 2, chloroplastic from Nicotiana tabacum (Common tobacco).